The chain runs to 333 residues: Adenosine deaminase (333 aa).

The Zn(2+) site is built by histidine 12 and histidine 14. Positions 14, 16, and 170 each coordinate substrate. Histidine 197 is a Zn(2+) binding site. Catalysis depends on glutamate 200, which acts as the Proton donor. Aspartate 278 is a Zn(2+) binding site. Aspartate 279 lines the substrate pocket.

Belongs to the metallo-dependent hydrolases superfamily. Adenosine and AMP deaminases family. Adenosine deaminase subfamily. The cofactor is Zn(2+).

It catalyses the reaction adenosine + H2O + H(+) = inosine + NH4(+). The catalysed reaction is 2'-deoxyadenosine + H2O + H(+) = 2'-deoxyinosine + NH4(+). Catalyzes the hydrolytic deamination of adenosine and 2-deoxyadenosine. This is Adenosine deaminase from Escherichia coli (strain SE11).